The following is a 247-amino-acid chain: V-type proton ATPase subunit D (247 aa).

Belongs to the V-ATPase D subunit family. V-ATPase is a heteromultimeric enzyme made up of two complexes: the ATP-hydrolytic V1 complex and the proton translocation V0 complex. The V1 complex consists of three catalytic AB heterodimers that form a heterohexamer, three peripheral stalks each consisting of EG heterodimers, one central rotor including subunits D and F, and the regulatory subunits C and H. The proton translocation complex V0 consists of the proton transport subunit a, a ring of proteolipid subunits c9c'', rotary subunit d, subunits e and f, and the accessory subunits ATP6AP1/Ac45 and ATP6AP2/PRR. Interacts with SNX10. As to expression, expressed in brain (at protein level). Present in tissues active in secretion. Amounts elevated in brain, kidney and testis.

It localises to the membrane. Its subcellular location is the cytoplasmic vesicle. It is found in the clathrin-coated vesicle membrane. The protein resides in the cytoplasm. The protein localises to the cytoskeleton. It localises to the microtubule organizing center. Its subcellular location is the centrosome. It is found in the cell projection. The protein resides in the cilium. Subunit of the V1 complex of vacuolar(H+)-ATPase (V-ATPase), a multisubunit enzyme composed of a peripheral complex (V1) that hydrolyzes ATP and a membrane integral complex (V0) that translocates protons. V-ATPase is responsible for acidifying and maintaining the pH of intracellular compartments and in some cell types, is targeted to the plasma membrane, where it is responsible for acidifying the extracellular environment. May play a role in cilium biogenesis through regulation of the transport and the localization of proteins to the cilium. This Bos taurus (Bovine) protein is V-type proton ATPase subunit D (ATP6V1D).